The following is a 59-amino-acid chain: ATP synthase protein 8 (59 aa).

Residues 7-23 (LSPPFLYFELIGHFQVE) form a helical membrane-spanning segment.

Belongs to the ATPase protein 8 family. F-type ATPases have 2 components, CF(1) - the catalytic core - and CF(0) - the membrane proton channel.

Its subcellular location is the mitochondrion membrane. In terms of biological role, mitochondrial membrane ATP synthase (F(1)F(0) ATP synthase or Complex V) produces ATP from ADP in the presence of a proton gradient across the membrane which is generated by electron transport complexes of the respiratory chain. F-type ATPases consist of two structural domains, F(1) - containing the extramembraneous catalytic core and F(0) - containing the membrane proton channel, linked together by a central stalk and a peripheral stalk. During catalysis, ATP synthesis in the catalytic domain of F(1) is coupled via a rotary mechanism of the central stalk subunits to proton translocation. Part of the complex F(0) domain. Minor subunit located with subunit a in the membrane. This is ATP synthase protein 8 (MT-ATP8) from Oenothera berteroana (Bertero's evening primrose).